Reading from the N-terminus, the 555-residue chain is Intraflagellar transport protein 56 (555 aa).

3 TPR repeats span residues 57 to 90 (LKNL…EDPD), 151 to 184 (IEDQ…HRDY), and 393 to 426 (DDFN…KYRN).

Belongs to the IFT56 family. In terms of assembly, component of the IFT complex B.

The protein resides in the cell projection. It localises to the cilium. The protein localises to the flagellum. Component of the intraflagellar transport (IFT) complex B required for transport of proteins in the motile cilium. Required for transport of specific ciliary cargo proteins related to motility, while it is neither required for IFT complex B assembly or motion nor for cilium assembly. This chain is Intraflagellar transport protein 56, found in Chlamydomonas reinhardtii (Chlamydomonas smithii).